The primary structure comprises 181 residues: MNKEQQDLQTEQEAAVETAELTPEQQLVQLQEKLAAKEQEAKDNWDKLLRERADLENYRKRASREKEELLNYGIKSLVEEVLPVLDNLERALEHANEDGLPALVEGVKMTHTLLQTALKKFGVCAVDGNCGTLFDPAFHQAMAQVETSDHPNNTIVQEFQKGYLLKERLLRPSMVSVAKNP.

Positions M1–L21 are disordered. The segment covering L8 to L21 has biased composition (low complexity).

It belongs to the GrpE family. As to quaternary structure, homodimer.

It is found in the cytoplasm. In terms of biological role, participates actively in the response to hyperosmotic and heat shock by preventing the aggregation of stress-denatured proteins, in association with DnaK and GrpE. It is the nucleotide exchange factor for DnaK and may function as a thermosensor. Unfolded proteins bind initially to DnaJ; upon interaction with the DnaJ-bound protein, DnaK hydrolyzes its bound ATP, resulting in the formation of a stable complex. GrpE releases ADP from DnaK; ATP binding to DnaK triggers the release of the substrate protein, thus completing the reaction cycle. Several rounds of ATP-dependent interactions between DnaJ, DnaK and GrpE are required for fully efficient folding. This chain is Protein GrpE, found in Trichlorobacter lovleyi (strain ATCC BAA-1151 / DSM 17278 / SZ) (Geobacter lovleyi).